A 125-amino-acid chain; its full sequence is Small ribosomal subunit protein uS12m (125 aa).

Disordered stretches follow at residues 1-29 (MPTK…QCPQ) and 105-125 (LGIP…PKSK). Basic and acidic residues predominate over residues 10-23 (HGREEKQRTDRTRA).

The protein belongs to the universal ribosomal protein uS12 family.

The protein localises to the mitochondrion. Protein S12 is involved in the translation initiation step. This Oryza sativa subsp. japonica (Rice) protein is Small ribosomal subunit protein uS12m (RPS12).